We begin with the raw amino-acid sequence, 233 residues long: Lipoprotein-releasing system ATP-binding protein LolD (233 aa).

In terms of domain architecture, ABC transporter spans 6 to 233 (LQCDNLCKRY…TAELSLMGAE (228 aa)). 42-49 (GSSGSGKS) contributes to the ATP binding site.

It belongs to the ABC transporter superfamily. Lipoprotein translocase (TC 3.A.1.125) family. In terms of assembly, the complex is composed of two ATP-binding proteins (LolD) and two transmembrane proteins (LolC and LolE).

It is found in the cell inner membrane. In terms of biological role, part of the ABC transporter complex LolCDE involved in the translocation of mature outer membrane-directed lipoproteins, from the inner membrane to the periplasmic chaperone, LolA. Responsible for the formation of the LolA-lipoprotein complex in an ATP-dependent manner. Such a release is dependent of the sorting-signal (absence of an Asp at position 2 of the mature lipoprotein) and of LolA. In Escherichia coli (strain K12), this protein is Lipoprotein-releasing system ATP-binding protein LolD.